The chain runs to 131 residues: C-type natriuretic peptide 1 (131 aa).

The signal sequence occupies residues 1–22 (MLCPVLLCATLLLLTPFEVTEA). Residues 23-109 (RALHPSADAV…KRAEPDRSRR (87 aa)) constitute a propeptide that is removed on maturation. Cysteine 115 and cysteine 131 are joined by a disulfide.

This sequence belongs to the natriuretic peptide family. In terms of tissue distribution, brain and spinal cord.

It is found in the secreted. Its function is as follows. Exhibits natriuretic and vasodepressant activity. Has cGMP-stimulating activity. May help to regulate body fluid homeostasis in a variety of aquatic environments. The protein is C-type natriuretic peptide 1 of Oryzias latipes (Japanese rice fish).